Reading from the N-terminus, the 168-residue chain is Phosphopantetheine adenylyltransferase (168 aa).

Substrate is bound at residue Thr17. ATP-binding positions include 17 to 18 (TF) and His25. Residues Lys49, Leu81, and Arg95 each coordinate substrate. Residues 96–98 (GLR), Glu106, and 131–137 (LMYISST) contribute to the ATP site.

Belongs to the bacterial CoaD family. In terms of assembly, homohexamer. Mg(2+) is required as a cofactor.

It is found in the cytoplasm. The catalysed reaction is (R)-4'-phosphopantetheine + ATP + H(+) = 3'-dephospho-CoA + diphosphate. It participates in cofactor biosynthesis; coenzyme A biosynthesis; CoA from (R)-pantothenate: step 4/5. Reversibly transfers an adenylyl group from ATP to 4'-phosphopantetheine, yielding dephospho-CoA (dPCoA) and pyrophosphate. The protein is Phosphopantetheine adenylyltransferase of Legionella pneumophila (strain Paris).